Here is a 38-residue protein sequence, read N- to C-terminus: Large ribosomal subunit protein bL36A (38 aa).

The protein belongs to the bacterial ribosomal protein bL36 family.

In Pectobacterium atrosepticum (strain SCRI 1043 / ATCC BAA-672) (Erwinia carotovora subsp. atroseptica), this protein is Large ribosomal subunit protein bL36A.